Here is a 383-residue protein sequence, read N- to C-terminus: Xylose/arabinose import ATP-binding protein XacJ (383 aa).

Residues 4–235 enclose the ABC transporter domain; it reads IQLTDLTKRF…PNNLFVAEFI (232 aa). An ATP-binding site is contributed by 36 to 43; sequence GPSGCGKS.

The protein belongs to the ABC transporter superfamily. Carbohydrate uptake transporter-1 (CUT1) (TC 3.A.1.1) family. The complex is composed of two ATP-binding proteins (XacJ and XacK), two transmembrane proteins (XacH and XacI) and a solute-binding protein (XacG).

The protein localises to the cell membrane. The catalysed reaction is D-xylose(out) + ATP + H2O = D-xylose(in) + ADP + phosphate + H(+). It catalyses the reaction L-arabinose(out) + ATP + H2O = L-arabinose(in) + ADP + phosphate + H(+). Part of the ABC transporter complex XacGHIJK involved in the uptake of xylose and arabinose. Responsible for energy coupling to the transport system. The chain is Xylose/arabinose import ATP-binding protein XacJ from Haloferax volcanii (strain ATCC 29605 / DSM 3757 / JCM 8879 / NBRC 14742 / NCIMB 2012 / VKM B-1768 / DS2) (Halobacterium volcanii).